The following is a 348-amino-acid chain: Phosphate acyltransferase (348 aa).

Belongs to the PlsX family. Homodimer. Probably interacts with PlsY.

It is found in the cytoplasm. The enzyme catalyses a fatty acyl-[ACP] + phosphate = an acyl phosphate + holo-[ACP]. Its pathway is lipid metabolism; phospholipid metabolism. Catalyzes the reversible formation of acyl-phosphate (acyl-PO(4)) from acyl-[acyl-carrier-protein] (acyl-ACP). This enzyme utilizes acyl-ACP as fatty acyl donor, but not acyl-CoA. This is Phosphate acyltransferase from Neisseria gonorrhoeae (strain ATCC 700825 / FA 1090).